Here is a 380-residue protein sequence, read N- to C-terminus: O-phospho-L-seryl-tRNA:Cys-tRNA synthase (380 aa).

Residues 86-87, asparagine 192, and 215-217 contribute to the pyridoxal 5'-phosphate site; these read AR and SGH. Residue lysine 218 is modified to N6-(pyridoxal phosphate)lysine.

The protein belongs to the SepCysS family. As to quaternary structure, homodimer. Interacts with SepRS. Pyridoxal 5'-phosphate serves as cofactor.

The enzyme catalyses O-phospho-L-seryl-tRNA(Cys) + hydrogen sulfide + H(+) = L-cysteinyl-tRNA(Cys) + phosphate. In terms of biological role, converts O-phospho-L-seryl-tRNA(Cys) (Sep-tRNA(Cys)) to L-cysteinyl-tRNA(Cys) (Cys-tRNA(Cys)). This Methanococcus maripaludis (strain C5 / ATCC BAA-1333) protein is O-phospho-L-seryl-tRNA:Cys-tRNA synthase.